Reading from the N-terminus, the 185-residue chain is Translocon-associated protein subunit gamma (185 aa).

Met1 is modified (N-acetylmethionine). Residues 1 to 27 (MAPKGGPKQQSEEDLLLQDFSRNLSAK) lie on the Lumenal side of the membrane. Ser11 bears the Phosphoserine mark. Residues 28–48 (SSALFFGNAFIVSAIPIWLYW) traverse the membrane as a helical segment. Residues 49-54 (RIWHMD) lie on the Cytoplasmic side of the membrane. The chain crosses the membrane as a helical span at residues 55-76 (LIQSAVLYSVMTLVSTYLVAFA). The Lumenal portion of the chain corresponds to 77–135 (YKNVKFVLKHKVAQKREDAVSKEVTRKLSEADNRKMSRKEKDERILWKKNEVADYEATT). Ser105 is subject to Phosphoserine. The chain crosses the membrane as a helical span at residues 136-157 (FSIFYNNTLFLVLVIVASFFIL). Topologically, residues 158-163 (KNFNPT) are cytoplasmic. A helical transmembrane segment spans residues 164 to 184 (VNYILSISASSGLIALLSTGS).

The protein belongs to the TRAP-gamma family. As to quaternary structure, heterotetramer of TRAP-alpha, TRAP-beta, TRAP-delta and TRAP-gamma.

It localises to the endoplasmic reticulum membrane. TRAP proteins are part of a complex whose function is to bind calcium to the ER membrane and thereby regulate the retention of ER resident proteins. The polypeptide is Translocon-associated protein subunit gamma (SSR3) (Bos taurus (Bovine)).